The primary structure comprises 563 residues: Arginine--tRNA ligase (563 aa).

Positions 121–131 (PNIAKPFSIGH) match the 'HIGH' region motif.

The protein belongs to the class-I aminoacyl-tRNA synthetase family. Monomer.

It localises to the cytoplasm. The enzyme catalyses tRNA(Arg) + L-arginine + ATP = L-arginyl-tRNA(Arg) + AMP + diphosphate. The protein is Arginine--tRNA ligase of Streptococcus equi subsp. equi (strain 4047).